Consider the following 261-residue polypeptide: MSNTVRAISPDITLFNKTLTFQEISQNTREAVIYIHGGAWNDPENTPNDFNQLANTIKSMDTESTVCQYSIEYRLSPEITNPRNLYDAVSNITRLVKEKGLTNINMVGHSVGATFIWQILAALKDPQEKMSEAQLQMLGLLQIVKRVFLLDGIYSLKELLVEYPEYDCFTRLAFPDGIQMYEEEPSRVMPYVKKALSRFSIDMHLVHSYSDELLTLRQTNCLISCLQDYQLSFKLYLDDLGLHNDVYKNGKVAKYIFDNIC.

At Ser9 the chain carries Phosphoserine. Positions 36–40 match the HGGXW motif; the sequence is HGGAW. Residue Ser110 is the Nucleophile of the active site. Residues Asp211 and His243 contribute to the active site.

This sequence belongs to the kynurenine formamidase family. Homodimer.

It carries out the reaction N-formyl-L-kynurenine + H2O = L-kynurenine + formate + H(+). The protein operates within amino-acid degradation; L-tryptophan degradation via kynurenine pathway; L-kynurenine from L-tryptophan: step 2/2. Catalyzes the hydrolysis of N-formyl-L-kynurenine to L-kynurenine, the second step in the kynurenine pathway of tryptophan degradation. Kynurenine may be further oxidized to nicotinic acid, NAD(H) and NADP(H). Required for elimination of toxic metabolites. The chain is Kynurenine formamidase from Saccharomyces cerevisiae (strain ATCC 204508 / S288c) (Baker's yeast).